We begin with the raw amino-acid sequence, 420 residues long: Tyrosine--tRNA ligase (420 aa).

Position 38 (Tyr-38) interacts with L-tyrosine. A 'HIGH' region motif is present at residues 43–52 (PTGDSLHIGH). Residues Tyr-169 and Gln-173 each contribute to the L-tyrosine site. The 'KMSKS' region signature appears at 231–235 (KFGKS). Lys-234 contributes to the ATP binding site. The S4 RNA-binding domain occupies 353–419 (KNIVEFLVET…GKRKYTLVKI (67 aa)).

This sequence belongs to the class-I aminoacyl-tRNA synthetase family. TyrS type 1 subfamily. As to quaternary structure, homodimer.

It is found in the cytoplasm. It catalyses the reaction tRNA(Tyr) + L-tyrosine + ATP = L-tyrosyl-tRNA(Tyr) + AMP + diphosphate + H(+). In terms of biological role, catalyzes the attachment of tyrosine to tRNA(Tyr) in a two-step reaction: tyrosine is first activated by ATP to form Tyr-AMP and then transferred to the acceptor end of tRNA(Tyr). This chain is Tyrosine--tRNA ligase, found in Lactobacillus johnsonii (strain CNCM I-12250 / La1 / NCC 533).